Consider the following 345-residue polypeptide: Methylthioribose-1-phosphate isomerase 2 (345 aa).

Substrate is bound by residues 47 to 49, Arg-88, and Gln-194; that span reads RGA. Residue Asp-235 is the Proton donor of the active site. 245–246 is a substrate binding site; the sequence is NK.

Belongs to the eIF-2B alpha/beta/delta subunits family. MtnA subfamily.

It catalyses the reaction 5-(methylsulfanyl)-alpha-D-ribose 1-phosphate = 5-(methylsulfanyl)-D-ribulose 1-phosphate. Its pathway is amino-acid biosynthesis; L-methionine biosynthesis via salvage pathway; L-methionine from S-methyl-5-thio-alpha-D-ribose 1-phosphate: step 1/6. Its function is as follows. Catalyzes the interconversion of methylthioribose-1-phosphate (MTR-1-P) into methylthioribulose-1-phosphate (MTRu-1-P). This chain is Methylthioribose-1-phosphate isomerase 2, found in Pseudothermotoga lettingae (strain ATCC BAA-301 / DSM 14385 / NBRC 107922 / TMO) (Thermotoga lettingae).